Reading from the N-terminus, the 152-residue chain is Xanthine-guanine phosphoribosyltransferase (152 aa).

Residues 37-38 (RG), R69, and 88-96 (DDLVDTGGT) contribute to the 5-phospho-alpha-D-ribose 1-diphosphate site. R69 contributes to the GMP binding site. D89 provides a ligand contact to Mg(2+). Guanine-binding residues include D92 and I135. The xanthine site is built by D92 and I135. Residues 92-96 (DTGGT) and 134-135 (WI) contribute to the GMP site.

The protein belongs to the purine/pyrimidine phosphoribosyltransferase family. XGPT subfamily. Homotetramer. Mg(2+) serves as cofactor.

The protein resides in the cell inner membrane. It catalyses the reaction GMP + diphosphate = guanine + 5-phospho-alpha-D-ribose 1-diphosphate. The enzyme catalyses XMP + diphosphate = xanthine + 5-phospho-alpha-D-ribose 1-diphosphate. It carries out the reaction IMP + diphosphate = hypoxanthine + 5-phospho-alpha-D-ribose 1-diphosphate. Its pathway is purine metabolism; GMP biosynthesis via salvage pathway; GMP from guanine: step 1/1. It participates in purine metabolism; XMP biosynthesis via salvage pathway; XMP from xanthine: step 1/1. Purine salvage pathway enzyme that catalyzes the transfer of the ribosyl-5-phosphate group from 5-phospho-alpha-D-ribose 1-diphosphate (PRPP) to the N9 position of the 6-oxopurines guanine and xanthine to form the corresponding ribonucleotides GMP (guanosine 5'-monophosphate) and XMP (xanthosine 5'-monophosphate), with the release of PPi. To a lesser extent, also acts on hypoxanthine. The polypeptide is Xanthine-guanine phosphoribosyltransferase (Shigella boydii serotype 4 (strain Sb227)).